Reading from the N-terminus, the 255-residue chain is 5'-nucleotidase SurE (255 aa).

A divalent metal cation is bound by residues Asp-8, Asp-9, Ser-40, and Asn-93.

The protein belongs to the SurE nucleotidase family. The cofactor is a divalent metal cation.

Its subcellular location is the cytoplasm. It catalyses the reaction a ribonucleoside 5'-phosphate + H2O = a ribonucleoside + phosphate. Its function is as follows. Nucleotidase that shows phosphatase activity on nucleoside 5'-monophosphates. The polypeptide is 5'-nucleotidase SurE (Rhodopseudomonas palustris (strain ATCC BAA-98 / CGA009)).